The chain runs to 184 residues: MKLSTSLLAIVAVASTFIGNALSATTVPGCFAECIDKAAVAVNCAAGDIDCLQASSQFATIVSECVATSDCTALSPGSASDADSINKTFNILSGLGFIDEADAFSAADVPEERDLTGLGRVLPVEKRQNCPTRRGLCVTSGLTACRNHCRSCHRGDVGCVRCSNAQCTGFLGTTCTCINPCPRC.

The signal sequence occupies residues 1-23; sequence MKLSTSLLAIVAVASTFIGNALS. Positions 24–127 are excised as a propeptide; the sequence is ATTVPGCFAE…LGRVLPVEKR (104 aa). Gln128 is subject to Pyrrolidone carboxylic acid. 6 disulfides stabilise this stretch: Cys130/Cys159, Cys137/Cys167, Cys145/Cys175, Cys149/Cys177, Cys152/Cys184, and Cys162/Cys181.

It belongs to the invertebrate defensin family. Post-translationally, contains a unique connectivity of 6 cysteine bonds in contrast to most other CS-alpha-beta defensins which are linked by 3 or 4 disulfide bonds. In terms of processing, disulfide bonds are essential for structural integrity and antibacterial activity, since activity is lost after treatment with reducing agents. Thanks to disulfide bonds and N-terminal pyroglutamate, the protein is extremely stable in a wide pH and temperature range and insensitive toward proteases.

The protein localises to the secreted. It is found in the target cell membrane. Antimicrobial peptide that acts against Gram-positive bacteria (Listeria spp., Enterococcus spp., B.subtilis, B.anthracis, P.aeruginosa). Is not active against Gram-negative bacteria. It selectively inhibits peptidoglycan biosynthesis through complex formation with the cell wall precursor lipid II (1:1 molar ratio), probably anchoring lipid II to the membrane, thus inhibiting cell wall synthesis. The interaction with lipid II involves the third position of the pentapeptide. Shows bactericidal activity at about 2-fold minimal inhibitory concentrations (MIC), but does not form pore across the membrane. The polypeptide is Fungal defensin copsin (Coprinopsis cinerea (Inky cap fungus)).